The following is a 411-amino-acid chain: 2,3-bisphosphoglycerate-independent phosphoglycerate mutase (411 aa).

This sequence belongs to the BPG-independent phosphoglycerate mutase family. A-PGAM subfamily.

It catalyses the reaction (2R)-2-phosphoglycerate = (2R)-3-phosphoglycerate. It functions in the pathway carbohydrate degradation; glycolysis; pyruvate from D-glyceraldehyde 3-phosphate: step 3/5. Catalyzes the interconversion of 2-phosphoglycerate and 3-phosphoglycerate. In Thermococcus kodakarensis (strain ATCC BAA-918 / JCM 12380 / KOD1) (Pyrococcus kodakaraensis (strain KOD1)), this protein is 2,3-bisphosphoglycerate-independent phosphoglycerate mutase.